Reading from the N-terminus, the 61-residue chain is MAKKSLIVKQKKHPKFKVRAYTRCERCGRPRAVIRKFGICRLCFRDLAYKGAIPGVKKASW.

Zn(2+) is bound by residues Cys24, Cys27, Cys40, and Cys43.

This sequence belongs to the universal ribosomal protein uS14 family. Zinc-binding uS14 subfamily. In terms of assembly, part of the 30S ribosomal subunit. Contacts proteins S3 and S10. It depends on Zn(2+) as a cofactor.

Its function is as follows. Binds 16S rRNA, required for the assembly of 30S particles and may also be responsible for determining the conformation of the 16S rRNA at the A site. This is Small ribosomal subunit protein uS14 from Malacoplasma penetrans (strain HF-2) (Mycoplasma penetrans).